A 304-amino-acid chain; its full sequence is DCN1-like protein 3 (304 aa).

2 disordered regions span residues 1 to 87 (MGQC…EESS) and 284 to 304 (EVEGRGTLSSGQEGLCPEEQT). A lipid anchor (N-myristoyl glycine) is attached at glycine 2. In terms of domain architecture, DCUN1 spans 86 to 278 (SSLQRLEELF…LFDTFVEWEM (193 aa)).

As to quaternary structure, part of a complex containing DCUN1D3, CUL3 and RBX1. Interacts (via the DCUN1 domain) with the unneddylated cullins: interacts with CUL1, CUL2, CUL3, CUL4A, CUL4B and CUL5; these interactions promote the cullin neddylation and the identity of the cullin dictates the affinity of the interaction. Interacts preferentially with CUL3; this interaction triggers the relocalization of CUL3 to the cell membrane where CUL3 is neddylated. Interacts (via DCUN1 domain) with RBX1. May also interact with regulators or subunits of cullin-RING ligases such as RNF7, ELOB and DDB1; these interactions are bridged by cullins. Interacts (via DCUN1 domain) with CAND1; this interaction is bridged by cullins and strongly inhibits cullin neddylation. These CAND-cullin-DCNL complexes can only be neddylated in the presence of a substrate adapter. Interacts (via DCUN1 domain) with the N-terminally acetylated form of UBE2M and UBE2F. In terms of tissue distribution, highest levels of expression are in the testis. Very low levels of expression in the heart, brain, skeletal muscle, kidney, liver, spleen, lung and ovary.

Its subcellular location is the cell membrane. It is found in the cytoplasm. The protein localises to the nucleus. The protein resides in the perinuclear region. Functionally, contributes to the neddylation of all cullins by transferring NEDD8 from N-terminally acetylated NEDD8-conjugating E2s enzyme to different cullin C-terminal domain-RBX complexes and may play a role in the cell cycle progression by regulating the SCF ubiquitin E3 ligase complex, after UV damage. At the cell membrane, can promote and as well inhibit cullins neddylation. This Mus musculus (Mouse) protein is DCN1-like protein 3.